Reading from the N-terminus, the 4493-residue chain is Mucin-17 (4493 aa).

The N-terminal stretch at 1–25 (MPRPGTMALCLLTLVLSLLPPQAAA) is a signal peptide. Residues 26 to 4393 (EQDLSVNRAV…QGTQKSLVYG (4368 aa)) are Extracellular-facing. The span at 88–105 (NPEMTSIESSVTSDTPGV) shows a compositional bias: polar residues. Disordered regions lie at residues 88-159 (NPEM…SISS), 188-223 (LTTS…SMPA), 248-277 (TISA…STPL), and 306-344 (VITS…ASTM). Residues 106–146 (SSTRMTPTESRTTSESTSDSTTLFPSSTEDTSSPTTPEGTD) are compositionally biased toward low complexity. The segment covering 148–159 (PMSTPSEESISS) has biased composition (polar residues). A run of 57 repeats spans residues 185–245 (STPL…EIST), 246–300 (PVTI…TTPA), 301–361 (ATNI…PVDT), 362–418 (STLV…TIPV), 420–477 (SKTF…TTPV), 479–538 (SKTQ…PVDT), 539–597 (STPV…PADS), 598–654 (NTFV…TTPV), 656–715 (SNTP…PVDT), 716–774 (STPV…PLDT), 775–831 (STHI…TTPV), 833–892 (SNSP…PVDT), 893–951 (STPV…PVDT), 952–1010 (STPV…PVDS), 1011–1069 (NTPL…PADT), 1070–1121 (STPV…ASTL), 1122–1187 (STTP…PVDS), 1188–1246 (KTQV…PVDT), 1247–1305 (STPV…PVDT), 1306–1364 (KGPV…PVDN), 1365–1423 (STPV…PVDT), 1424–1482 (STPG…PVDS), 1483–1541 (NSPV…PAVT), 1542–1600 (STPV…PIDS), 1601–1656 (KTQV…TTPV), 1658–1717 (SNSP…PVDN), 1718–1776 (STPV…PIDT), 1777–1835 (STPV…PVDS), 1836–1895 (NSPV…AVTS), 1896–1951 (TPVT…TTLA), 1953–2012 (TRTP…PVDT), 2013–2071 (STPA…PVDS), 2072–2127 (KTQV…TTPV), 2129–2188 (SNSP…PVDT), 2189–2247 (STPV…PVDT), 2248–2306 (STPV…PVDS), 2307–2365 (NTPF…PADT), 2366–2424 (STPV…PVDT), 2425–2483 (STPV…PVDT), 2484–2540 (STPM…TTPV), 2542–2601 (SNSP…PVDT), 2602–2653 (SIPV…ASTL), 2654–2719 (STTP…PVDT), 2720–2770 (STPV…EAST), 2772–2837 (STTA…PVDT), 2838–2896 (STPV…PVDT), 2897–2955 (SIPV…PVDT), 2956–3014 (RTPV…PADT), 3015–3073 (STPV…PVDS), 3074–3132 (NSPV…PVDT), 3133–3191 (STPV…PVDT), 3192–3247 (STPV…TTPV), 3249–3308 (SNTP…PADT), 3309–3367 (STPV…PVDT), 3368–3426 (STPV…PVDS), 3427–3485 (NTLV…PVDT), and 3486–3544 (STPV…PVDS). A 59 X approximate tandem repeats region spans residues 185 to 3727 (STPLTTSTQA…SVVTSTPVTT (3543 aa)). The span at 188-210 (LTTSTQASSSPTTPESTTIPKST) shows a compositional bias: low complexity. The span at 211–223 (NSEGSTPLTSMPA) shows a compositional bias: polar residues. Residues 308-323 (TSTEASSSPTTAEGTS) show a composition bias toward low complexity. A compositionally biased stretch (polar residues) spans 324 to 344 (IPTSTYTEGSTPLTSTPASTM). Positions 425 to 441 (TTASEASSSPTTAEDTS) are enriched in low complexity. 6 disordered regions span residues 425-629 (TTAS…ERGT), 644-868 (SEAS…TPLT), 886-1104 (STTP…TPLT), 1116-1163 (SEAS…TPLA), 1175-1279 (SEAN…GSTL), and 1296-1338 (STLL…GRTP). Positions 442 to 483 (IATSTPSEGSTPLTSMPVSTTPVASSEASNLSTTPVDSKTQV) are enriched in polar residues. N471 is a glycosylation site (N-linked (GlcNAc...) asparagine). Residues 484-497 (TTSTEASSSPPTAE) are compositionally biased toward low complexity. Residues 498–528 (VNSMPTSTPSEGSTPLTSMSVSTMPVASSEA) show a composition bias toward polar residues. 2 stretches are compositionally biased toward low complexity: residues 529 to 573 (STLS…TPLT) and 584 to 618 (SSEA…EGTS). Composition is skewed to polar residues over residues 619–629 (MPTSTYSERGT) and 644–660 (SEAS…NTPV). Low complexity predominate over residues 661 to 677 (TTSTEATSSSTTAEGTS). Residues 678-705 (MPTSTYTEGSTPLTSMPVNTTLVASSEA) show a composition bias toward polar residues. A glycan (N-linked (GlcNAc...) asparagine) is linked at N696. Residues 706-733 (STLSTTPVDTSTPVTTSTEASSSPTTAD) show a composition bias toward low complexity. Polar residues predominate over residues 737–754 (MPTSTPSEGSTPLTSMPV). Residues 755–776 (SKTLLTSSEASTLSTTPLDTST) are compositionally biased toward low complexity. A compositionally biased stretch (polar residues) spans 777–832 (HITTSTEASCSPTTTEGTSMPISTPSEGSPLLTSIPVSITPVTSPEASTLSTTPVD). The span at 833-849 (SNSPVTTSTEVSSSPTP) shows a compositional bias: low complexity. Over residues 854 to 868 (SMPTSTYSEGRTPLT) the composition is skewed to polar residues. The span at 886 to 900 (STTPVDTSTPVTNST) shows a compositional bias: low complexity. The N-linked (GlcNAc...) asparagine glycan is linked to N898. Residues 901-944 (EARSSPTTSEGTSMPTSTPGEGSTPLTSMPDSTTPVVSSEARTL) show a composition bias toward polar residues. Over residues 945–972 (SATPVDTSTPVTTSTEATSSPTTAEGTS) the composition is skewed to low complexity. Residues 973 to 1011 (IPTSTPSEGTTPLTSTPVSHTLVANSEASTLSTTPVDSN) are compositionally biased toward polar residues. A compositionally biased stretch (low complexity) spans 1012–1021 (TPLTTSTEAS). Residues 1029 to 1062 (GTSMPTSTPSEGSTPLTRMPVSTTMVASSETSTL) are compositionally biased toward polar residues. Residues 1063–1090 (STTPADTSTPVTTYSQASSSSTTADGTS) are compositionally biased toward low complexity. 2 stretches are compositionally biased toward polar residues: residues 1091–1104 (MPTS…TPLT) and 1116–1132 (SEAS…SIPV). Low complexity predominate over residues 1133-1149 (TTSTEASSSPTTAEGTS). Composition is skewed to polar residues over residues 1175–1198 (SEAN…TEAS) and 1205–1222 (EVTS…TPLT). The segment covering 1237-1279 (STLSTSPVDTSTPVTTSAETSSSPTTAEGTSLPTSTTSEGSTL) has biased composition (low complexity). Polar residues-rich tracts occupy residues 1310-1320 (VTSNEVSSSPT) and 1326-1338 (SMPT…GRTP). Residue N1345 is glycosylated (N-linked (GlcNAc...) asparagine). Residues 1360-1394 (TPVDNSTPVTTSTEACSSPTTSEGTSMPNSNPSEG) are compositionally biased toward polar residues. 20 disordered regions span residues 1360-1516 (TPVD…STAL), 1537-1575 (TPAV…STPL), 1590-1930 (ANTL…PLTS), 1947-2163 (STTL…RTPL), 2177-2281 (AIST…TTPL), 2295-2501 (EVST…TTAE), 2524-2630 (TTPV…TPSE), 2647-2693 (SSEA…RSTP), 2709-2751 (ASTL…DGST), 2765-2853 (SSEA…SPTT), 2879-2925 (TPVA…TPSE), 2942-3167 (GSEA…TPLT), 3182-3577 (STLS…GSSS), 3589-3635 (TSSE…EVST), 3667-3701 (ITST…TMPV), 3785-3812 (MTTA…TSER), 3829-3849 (PSEA…LLTS), 3892-3914 (ASIA…DTAS), 3965-3988 (VITS…FSTT), and 4008-4129 (STAP…TPTV). Composition is skewed to low complexity over residues 1395–1415 (TTPL…EAST) and 1423–1442 (TSTP…TAEG). The segment covering 1461 to 1483 (PVSNTPVANSEASTLSTTPVDSN) has biased composition (polar residues). Residues 1484 to 1499 (SPVVTSTAVSSSPTPA) are compositionally biased toward low complexity. Residues 1504–1516 (IAISTPSEGSTAL) are compositionally biased toward polar residues. Positions 1537 to 1547 (TPAVTSTPVTT) are enriched in low complexity. Polar residues-rich tracts occupy residues 1548-1575 (YSQA…STPL) and 1590-1604 (ANTL…KTQV). Residues 1605 to 1620 (TASTEASSSTTAEGSS) show a composition bias toward low complexity. 2 stretches are compositionally biased toward polar residues: residues 1621–1673 (MTIS…SSPT) and 1679–1775 (SMPT…TPID). Over residues 1776 to 1797 (TSTPVTTSTEATSSPTTAEGTS) the composition is skewed to low complexity. Positions 1798 to 1836 (IPTSTLSEGMTPLTSTPVSHTLVANSEASTLSTTPVDSN) are enriched in polar residues. Residues 1837-1852 (SPVVTSTAVSSSPTPA) show a composition bias toward low complexity. The span at 1856–1883 (SIATSTPSEGSTALTSIPVSTTTVASSE) shows a compositional bias: polar residues. The span at 1884 to 1900 (TNTLSTTPAVTSTPVTT) shows a compositional bias: low complexity. Composition is skewed to polar residues over residues 1901–1921 (YAQV…TSTP) and 1947–1976 (STTL…TSMP). The segment covering 1984–2033 (STPLTSMPLSTTLVVSSEASTLSTTPVDTSTPATTSTEGSSSPTTAGGTS) has biased composition (low complexity). Composition is skewed to polar residues over residues 2034–2043 (IQTSTPSERT) and 2051–2077 (VSTT…QVTN). N2077 carries N-linked (GlcNAc...) asparagine glycosylation. Over residues 2078 to 2091 (STEASSSATAEGSS) the composition is skewed to low complexity. A compositionally biased stretch (polar residues) spans 2092-2156 (MTISAPSEGS…EGTSMQTSTY (65 aa)). Positions 2177–2196 (AISTLSTTPVDTSTPVTNST) are enriched in low complexity. An N-linked (GlcNAc...) asparagine glycan is attached at N2194. Residues 2197 to 2240 (EARSSPTTSEGTSMPTSTPSEGSTPFTSMPVSTMPVVTSEASTL) show a composition bias toward polar residues. A compositionally biased stretch (low complexity) spans 2241–2268 (SATPVDTSTPVTTSTEATSSPTTAEGTS). Polar residues-rich tracts occupy residues 2269–2281 (IPTS…TTPL) and 2295–2307 (EVST…VDSN). A compositionally biased stretch (low complexity) spans 2308–2317 (TPFTTSTEAS). Polar residues predominate over residues 2325 to 2358 (GTSMPTSTSSEGNTPLTRMPVSTTMVASFETSTL). Over residues 2359 to 2371 (STTPADTSTPVTT) the composition is skewed to low complexity. The segment covering 2372–2395 (YSQAGSSPTTADDTSMPTSTYSEG) has biased composition (polar residues). Low complexity-rich tracts occupy residues 2396–2445 (STPL…EGTS) and 2462–2499 (PVST…SPTT). Residues 2524–2547 (TTPVASPEASTLSTTPVDSNSPVV) show a composition bias toward polar residues. Residues 2548 to 2563 (TSTEISSSATSAEGTS) are compositionally biased toward low complexity. Over residues 2564–2576 (MPTSTYSEGSTPL) the composition is skewed to polar residues. Positions 2586–2617 (LASSEASTLSTTPVDTSIPVTTSTETSSSPTT) are enriched in low complexity. Over residues 2618-2628 (AKDTSMPISTP) the composition is skewed to polar residues. Residues 2654–2681 (STTPVDTRTLVTTSTGTSSSPTTAEGSS) show a composition bias toward low complexity. Residues 2682-2693 (MPTSTPGERSTP) show a composition bias toward polar residues. Over residues 2710 to 2740 (STLSTTPVDTSTPVTTSAEASSSPTTAEGTS) the composition is skewed to low complexity. Residues 2741-2751 (MRISTPSDGST) are compositionally biased toward polar residues. Low complexity-rich tracts occupy residues 2765-2816 (SSEA…TSMP) and 2829-2853 (TLST…SPTT). Residues 2879–2900 (TPVASSEASTLSTTPVDTSIPV) show a composition bias toward polar residues. 2 stretches are compositionally biased toward low complexity: residues 2901–2917 (TTST…EGTS) and 2950–2976 (TTPV…EGTS). The segment covering 2988-3009 (PLTSMSVSTMPVASSEASTLSR) has biased composition (polar residues). The span at 3010–3031 (TPADTSTPVTTSTEASSSPTTA) shows a compositional bias: low complexity. Over residues 3037 to 3057 (PISTPSEGSTPLTSIPVSTTP) the composition is skewed to polar residues. Composition is skewed to low complexity over residues 3073–3089 (SNSP…SPTP) and 3104–3140 (STPL…TTST). Residues 3141–3166 (EAHSSPTTSEGTSMPTSTPSEGSTPL) are compositionally biased toward polar residues. Positions 3185-3211 (SATPVDTSTPVTTSTEATSSTTAEGTS) are enriched in low complexity. Residues 3212–3253 (IPTSTPSEGMTPLTSVPVSNTPVASSEASILSTTPVDSNTPL) are compositionally biased toward polar residues. Over residues 3254 to 3267 (TTSTEASSSPPTAE) the composition is skewed to low complexity. Positions 3268–3288 (GTSMPTSTPSEGSTPLTSMPV) are enriched in polar residues. Over residues 3289 to 3314 (STTTVASSETSTLSTTPADTSTPVTT) the composition is skewed to low complexity. The span at 3329–3357 (SMPTSTYSEGSTPLTNMSFSTTPVVSSEA) shows a compositional bias: polar residues. N-linked (GlcNAc...) asparagine glycosylation is present at N3344. Low complexity predominate over residues 3358 to 3375 (STLSTTPVDTSTPVTTST). Positions 3376–3401 (EASLSPTTAEGTSIPTSSPSEGTTPL) are enriched in polar residues. Low complexity predominate over residues 3405 to 3414 (PVSTTPVVSS). Composition is skewed to polar residues over residues 3415-3441 (EVNT…SSPT) and 3447-3475 (SLPT…SSEA). A compositionally biased stretch (low complexity) spans 3476 to 3501 (STLSTTPVDTSTPVTTSSPTNSSPTT). Polar residues-rich tracts occupy residues 3502–3549 (AEVT…TFVT) and 3558–3571 (PATL…MSTP). Residues 3589-3616 (TSSEASTPSTPSVDRSTPVTTSTQSNST) show a composition bias toward low complexity. Tandem repeats lie at residues 3604–3662 (STPV…PVDT) and 3663–3727 (STPV…PVTT). Positions 3626–3635 (PMSTPSEVST) are enriched in polar residues. The segment covering 3667–3679 (ITSTQVSSSPVTP) has biased composition (low complexity). 2 stretches are compositionally biased toward polar residues: residues 3690-3701 (SEGSTPLTTMPV) and 3785-3806 (MTTA…TMPM). 3 stretches are compositionally biased toward low complexity: residues 3967–3988 (TSTE…FSTT), 4008–4083 (STAP…SSTT), and 4090–4129 (TTMT…TPTV). An N-linked (GlcNAc...) asparagine glycan is attached at N4116. Positions 4131–4170 (RTTTCFGDGCQNTASRCKNGGTWDGLKCQCPNLYYGELCE) constitute an EGF-like domain. 3 cysteine pairs are disulfide-bonded: C4135-C4147, C4140-C4158, and C4160-C4169. In terms of domain architecture, SEA spans 4184–4291 (ISAQMELTVT…QQIMINDICS (108 aa)). N-linked (GlcNAc...) asparagine glycosylation is found at N4205, N4236, N4267, N4297, and N4305. The helical transmembrane segment at 4394–4414 (LVGAGVVLMLIILVALLMLVF) threads the bilayer. Over 4415–4493 (RSKREVKRQK…QRPQVMTTSF (79 aa)) the chain is Cytoplasmic.

Interacts via its C-terminus with PDZK1 and this interaction appears important for proper localization. Post-translationally, probably cleaved within the SEA domain. N-glycosylated. Contains high mannose and complex-type glycans. The forms containing the complex type glycans localize to the cell surface. Not O-glycosylated. As to expression, expressed almost exclusively in the intestine. Expression is especially high in both the duodenum and transverse colon. Expressed in mature absorptive cells of the small intestinal villi. No expression is detected in goblet cells. Highly expressed in pancreatic adenocarcinoma tissue (at protein level). Expression is not detectable in normal pancreas, in pancreatitis or in cell lines derived from other cancers.

It is found in the cell membrane. Its subcellular location is the secreted. Functionally, probably plays a role in maintaining homeostasis on mucosal surfaces. The polypeptide is Mucin-17 (MUC17) (Homo sapiens (Human)).